Reading from the N-terminus, the 527-residue chain is Phosphoenolpyruvate carboxykinase (ATP) (527 aa).

Substrate contacts are provided by Arg-56, Tyr-191, and Lys-197. ATP-binding positions include Lys-197, His-216, and Gly-232–Thr-240. 2 residues coordinate Mn(2+): Lys-197 and His-216. Mn(2+) is bound at residue Asp-253. Residues Glu-281, Arg-318, Arg-437–Ile-438, and Thr-443 each bind ATP. Arg-318 is a binding site for substrate.

It belongs to the phosphoenolpyruvate carboxykinase (ATP) family. Requires Mn(2+) as cofactor.

Its subcellular location is the cytoplasm. It carries out the reaction oxaloacetate + ATP = phosphoenolpyruvate + ADP + CO2. It functions in the pathway carbohydrate biosynthesis; gluconeogenesis. Involved in the gluconeogenesis. Catalyzes the conversion of oxaloacetate (OAA) to phosphoenolpyruvate (PEP) through direct phosphoryl transfer between the nucleoside triphosphate and OAA. The protein is Phosphoenolpyruvate carboxykinase (ATP) of Shouchella clausii (strain KSM-K16) (Alkalihalobacillus clausii).